We begin with the raw amino-acid sequence, 509 residues long: MQSWSRVYCSLVKRGHFSRISHGLQGVSVVPLRTYADQPIDADVTVIGSGPGGYVAAIKAAQLGFKTVCVEKNETLGGTCLNVGCIPSKALLNNSHFYHLAHGKDFASRGIEMSEVRLNLEKMMEQKSNAVKALTGGIAHLFKQNKVVHVNGYGKITGKNQVTATKADGSTQVIDTKNILIATGSEVTPFPGITIDEDTIVSSTGALSLKKVPEKLVVIGAGVIGVELGSVWQRLGADVTAVEFLGHVGGVGIDMEISKNFQRILQKQGFKFKLNTKVTGATKKSDGKIDVSIEAASGGKAEVITCDVLLVCIGRRPFTQNLGLEELGIELDTRGRIPVNTRFQTKIPNIYAIGDVVAGPMLAHKAEDEGIICVEGMAGGAVHIDYNCVPSVIYTHPEVAWVGKSEEQLKEEGIEYKVGKFPFAANSRAKTNADTDGMVKILGQKSTDRVLGAHILGPGAGEMVNEAALALEYGASCEDIARVCHAHPTLSEAFREANLAASFGKSINF.

The transit peptide at 1 to 35 (MQSWSRVYCSLVKRGHFSRISHGLQGVSVVPLRTY) directs the protein to the mitochondrion. K66 carries the post-translational modification N6-acetyllysine; alternate. At K66 the chain carries N6-succinyllysine; alternate. FAD is bound by residues 71 to 80 (EKNETLGGTC) and K89. Residues C80 and C85 are joined by a disulfide bond. N6-acetyllysine; alternate occurs at positions 104, 122, 132, and 143. An N6-succinyllysine; alternate mark is found at K104, K122, K132, and K143. G154 is an FAD binding site. N6-succinyllysine is present on residues K159 and K166. 183–185 (TGS) provides a ligand contact to FAD. NAD(+)-binding positions include 220–227 (GAGVIGVE) and E243. K273 and K277 each carry N6-succinyllysine. V278 is a binding site for NAD(+). S285 and S297 each carry phosphoserine. G314 is a binding site for NAD(+). An N6-acetyllysine modification is found at K346. FAD-binding positions include D355 and 361-364 (MLAH). An N6-acetyllysine; alternate modification is found at K410. Residue K410 is modified to N6-succinyllysine; alternate. Residues K417 and K420 each carry the N6-acetyllysine modification. An N6-succinyllysine modification is found at K430. H487 serves as the catalytic Proton acceptor. K505 carries the N6-acetyllysine; alternate modification. An N6-succinyllysine; alternate modification is found at K505.

This sequence belongs to the class-I pyridine nucleotide-disulfide oxidoreductase family. In terms of assembly, homodimer. Part of the multimeric pyruvate dehydrogenase complex that contains multiple copies of pyruvate dehydrogenase (subunits PDHA (PDHA1 or PDHA2) and PDHB, E1), dihydrolipoamide acetyltransferase (DLAT, E2) and lipoamide dehydrogenase (DLD, E3). These subunits are bound to an inner core composed of about 48 DLAT and 12 PDHX molecules (by non covalent bonds). The 2-oxoglutarate dehydrogenase complex is composed of OGDH (2-oxoglutarate dehydrogenase; E1), DLST (dihydrolipoamide succinyltransferase; E2), DLD (dihydrolipoamide dehydrogenase; E3) and the assembly factor KGD4. It contains multiple copies of the three enzymatic components (E1, E2 and E3). In the nucleus, the 2-oxoglutarate dehydrogenase complex associates with KAT2A. Interacts with PDHX. The cofactor is FAD. Post-translationally, tyrosine phosphorylated.

It localises to the mitochondrion matrix. The protein resides in the nucleus. It is found in the cell projection. The protein localises to the cilium. Its subcellular location is the flagellum. It localises to the cytoplasmic vesicle. The protein resides in the secretory vesicle. It is found in the acrosome. The enzyme catalyses N(6)-[(R)-dihydrolipoyl]-L-lysyl-[protein] + NAD(+) = N(6)-[(R)-lipoyl]-L-lysyl-[protein] + NADH + H(+). Functionally, lipoamide dehydrogenase is a component of the glycine cleavage system as well as an E3 component of three alpha-ketoacid dehydrogenase complexes (pyruvate-, alpha-ketoglutarate-, and branched-chain amino acid-dehydrogenase complex). The 2-oxoglutarate dehydrogenase complex is mainly active in the mitochondrion. A fraction of the 2-oxoglutarate dehydrogenase complex also localizes in the nucleus and is required for lysine succinylation of histones: associates with KAT2A on chromatin and provides succinyl-CoA to histone succinyltransferase KAT2A. In monomeric form may have additional moonlighting function as serine protease. Involved in the hyperactivation of spermatazoa during capacitation and in the spermatazoal acrosome reaction. This Bos taurus (Bovine) protein is Dihydrolipoyl dehydrogenase, mitochondrial (DLD).